A 572-amino-acid polypeptide reads, in one-letter code: MFS-type transporter pydD (572 aa).

The segment covering 1 to 15 has biased composition (basic and acidic residues); sequence MLQEDKSSETMHDPS. Positions 1–46 are disordered; the sequence is MLQEDKSSETMHDPSTRGVETRNVTAVDSPLETATTSESPETERTN. A glycan (N-linked (GlcNAc...) asparagine) is linked at Asn23. Residues 29 to 39 are compositionally biased toward low complexity; it reads SPLETATTSES. 8 helical membrane-spanning segments follow: residues 56 to 76, 88 to 108, 123 to 143, 156 to 176, 185 to 205, 212 to 232, 255 to 275, and 282 to 302; these read FWAL…EGTI, LGGG…MTAM, WPML…GGAT, GIGA…VVPL, IVMG…GLIV, WTFY…FSFL, ALFV…GSVY, and VLVP…FEGS. An N-linked (GlcNAc...) asparagine glycan is attached at Asn317. A run of 6 helical transmembrane segments spans residues 321–341, 358–378, 386–406, 419–439, 451–471, and 529–549; these read VGVM…LYFM, VQIL…GFLM, PIHY…SLLD, IVYS…LLAP, TWSF…AAVF, and WLVS…AREV.

It belongs to the major facilitator superfamily.

It is found in the membrane. Its function is as follows. MFS-type transporter; part of the gene cluster that mediates the biosynthesis of pyrrocidines, fungal natural products containing a macrocyclic para-cyclophane connected to a decahydrofluorene ring system that show potent antibiotic activities toward Gram-negative bacteria. The chain is MFS-type transporter pydD from Acremonium sp.